The primary structure comprises 447 residues: Putative branched-chain amino acid carrier protein SAB1263c (447 aa).

Transmembrane regions (helical) follow at residues 6-26 (WVIG…IFPP), 40-60 (ILAF…VGAL), 74-94 (PKFS…LFAI), 114-134 (SSIA…YICL), 143-163 (IGSL…IKGY), 193-213 (GYLT…VNAV), 229-249 (LTAG…LGYI), 290-310 (LLGI…IGAV), 326-346 (FVLV…NAVI), 350-370 (IPVL…ILIA), 382-402 (IPVI…LGWL), and 417-437 (LEWF…GIFV).

This sequence belongs to the branched chain amino acid transporter family.

Its subcellular location is the cell membrane. In terms of biological role, component of the transport system for branched-chain amino acids (leucine, isoleucine and valine), which is coupled to a proton motive force (Potential). Contributes to NaCl tolerance. The protein is Putative branched-chain amino acid carrier protein SAB1263c of Staphylococcus aureus (strain bovine RF122 / ET3-1).